A 1372-amino-acid chain; its full sequence is Disease resistance protein RRS1B (1372 aa).

In terms of domain architecture, TIR spans 2–137; the sequence is TESEQIVYIS…ETVRDVYEKL (136 aa). The 252-residue stretch at 166–417 folds into the NB-ARC domain; that stretch reads VGIWGMPGIG…GCGFFPHVGI (252 aa). Position 170-177 (170-177) interacts with ATP; it reads GMPGIGKT. One copy of the LRR 1 repeat lies at 491 to 515; that stretch reads PEEIEGMFLDTSNLSFDIKHVAFDN. An LRR 2; degenerate repeat occupies 528–544; sequence NPEVHHVNNFLKGSLSS. LRR repeat units follow at residues 545-568, 570-591, 614-637, 638-658, 659-681, 693-718, 723-747, 749-767, 768-792, and 798-823; these read LPNVLRLLHWENYPLQFLPQNFDP, HLVEINMPYSQLKKLWGGTKDL, AQNLEVVDLQGCTRLQSFPATGQL, LHLRVVNLSGCTEIKSFPEIP, PNIETLNLQGTGIIELPLSIVKP, IPGLSGVSNLEQSDLKPLTSLMKIST, PGKLSCLELNDCSRLRSLPNMVNLE, LKALDLSGCSELETIQGFP, RNLKELYLVGTAVRQVPQLPQSLEF, and CVSLKSIRLDFKKLPVHYTFSNCFDL. A Nuclear localization signal motif is present at residues 950–964; it reads INLHCWALGKAVERD. The WRKY DNA-binding region spans 1174–1240; the sequence is DRGSRSSDLW…YISEHNHPFP (67 aa). Disordered regions lie at residues 1246-1288 and 1337-1372; these read LAGS…ASPP and QTMFLSRRSSGGNMEAQGKNSSDDREVNLPSKILNR. Low complexity predominate over residues 1249-1269; the sequence is STRSSSSKCSDVTTSASSTVS. A compositionally biased stretch (basic and acidic residues) spans 1270 to 1279; sequence QDKEGPDKSH. Residues 1337-1348 are compositionally biased toward polar residues; sequence QTMFLSRRSSGG.

The protein belongs to the disease resistance TIR-NB-LRR family. As to quaternary structure, interacts with RPS4B. RPS4B-RRS1B heterodimer interacts with the bacterial effectors AvrRps4 and PopP2.

Its subcellular location is the nucleus. Its function is as follows. Transcription factor. Interacts specifically with the W box (5'-(T)TGAC[CT]-3'), a frequently occurring elicitor-responsive cis-acting element. Also acts as a disease resistance protein that specifically recognizes the AvrRps4 type III effector avirulence protein from P.syringae. Heterodimerization with RPS4B is required to form a functional complex to recognize AvrRps4 and to mediate the hypersensitive response. This chain is Disease resistance protein RRS1B, found in Arabidopsis thaliana (Mouse-ear cress).